A 197-amino-acid polypeptide reads, in one-letter code: Recombination protein RecR (197 aa).

The segment at 56-71 (CHVCGNYCESDTCNIC) adopts a C4-type zinc-finger fold. The region spanning 79-174 (RIICVVEESK…KITKLASGIP (96 aa)) is the Toprim domain.

It belongs to the RecR family.

In terms of biological role, may play a role in DNA repair. It seems to be involved in an RecBC-independent recombinational process of DNA repair. It may act with RecF and RecO. This Fusobacterium nucleatum subsp. nucleatum (strain ATCC 25586 / DSM 15643 / BCRC 10681 / CIP 101130 / JCM 8532 / KCTC 2640 / LMG 13131 / VPI 4355) protein is Recombination protein RecR.